A 141-amino-acid polypeptide reads, in one-letter code: Large ribosomal subunit protein uL11 (141 aa).

It belongs to the universal ribosomal protein uL11 family. In terms of assembly, part of the ribosomal stalk of the 50S ribosomal subunit. Interacts with L10 and the large rRNA to form the base of the stalk. L10 forms an elongated spine to which L12 dimers bind in a sequential fashion forming a multimeric L10(L12)X complex. In terms of processing, one or more lysine residues are methylated.

Forms part of the ribosomal stalk which helps the ribosome interact with GTP-bound translation factors. In Clostridium botulinum (strain Kyoto / Type A2), this protein is Large ribosomal subunit protein uL11.